Reading from the N-terminus, the 91-residue chain is Small ribosomal subunit protein uS19m (91 aa).

This sequence belongs to the universal ribosomal protein uS19 family. As to quaternary structure, component of the mitochondrial small ribosomal subunit (mt-SSU). Mature yeast 74S mitochondrial ribosomes consist of a small (37S) and a large (54S) subunit. The 37S small subunit contains a 15S ribosomal RNA (15S mt-rRNA) and 34 different proteins. The 54S large subunit contains a 21S rRNA (21S mt-rRNA) and 46 different proteins.

Its subcellular location is the mitochondrion. In terms of biological role, component of the mitochondrial ribosome (mitoribosome), a dedicated translation machinery responsible for the synthesis of mitochondrial genome-encoded proteins, including at least some of the essential transmembrane subunits of the mitochondrial respiratory chain. The mitoribosomes are attached to the mitochondrial inner membrane and translation products are cotranslationally integrated into the membrane. The chain is Small ribosomal subunit protein uS19m (RSM19) from Saccharomyces cerevisiae (strain ATCC 204508 / S288c) (Baker's yeast).